The primary structure comprises 267 residues: MKYYRRALYDKFVHFYLVISDDGSSEAQLRGKMGGLVRKARKKISPDWPKEEQIHQLLQLFYGDWGFHCDPEDYFYARNLYLPYVFEHRQGMPVTLGAMVFYLAEALDLPIYPVNFPTQLILRAEVRDEVAFIDPWDGTYISQEKLQQLYEGAFGFGAKIQPEELDRADLSLLYSRFEQLAKNALIREEHNDMAYHYIKNLMITDAENPYHIRDRGLVLAQMGAYPSALKDLEFFVEHCPKDPTAAFIRTQLLELKGEINKDTFPLH.

This sequence belongs to the UPF0162 family.

This Haemophilus influenzae (strain ATCC 51907 / DSM 11121 / KW20 / Rd) protein is UPF0162 protein HI_1558.